Reading from the N-terminus, the 509-residue chain is Photosystem II CP47 reaction center protein (509 aa).

Helical transmembrane passes span 21–36 (SVHL…WAGS), 101–115 (IVLS…VWHW), 140–156 (GIHL…FGAF), 203–218 (IAAG…FHLT), 237–252 (VLSS…AFVV), and 457–472 (VFAL…HGAR).

Belongs to the PsbB/PsbC family. PsbB subfamily. PSII is composed of 1 copy each of membrane proteins PsbA, PsbB, PsbC, PsbD, PsbE, PsbF, PsbH, PsbI, PsbJ, PsbK, PsbL, PsbM, PsbT, PsbX, PsbY, PsbZ, Psb30/Ycf12, peripheral proteins PsbO, CyanoQ (PsbQ), PsbU, PsbV and a large number of cofactors. It forms dimeric complexes. Binds multiple chlorophylls. PSII binds additional chlorophylls, carotenoids and specific lipids. is required as a cofactor.

The protein resides in the cellular thylakoid membrane. Functionally, one of the components of the core complex of photosystem II (PSII). It binds chlorophyll and helps catalyze the primary light-induced photochemical processes of PSII. PSII is a light-driven water:plastoquinone oxidoreductase, using light energy to abstract electrons from H(2)O, generating O(2) and a proton gradient subsequently used for ATP formation. The chain is Photosystem II CP47 reaction center protein from Nostoc sp. (strain PCC 7120 / SAG 25.82 / UTEX 2576).